The following is an 843-amino-acid chain: Transmembrane protease serine 7 (843 aa).

Over 1–76 the chain is Cytoplasmic; that stretch reads MDKENSDVSA…KVPFWNVQNK (76 aa). Residues 27 to 67 are disordered; that stretch reads AQKKLPVRRPPLPGRRLPLPGRRPPQRPIGKAKPKKQSKKK. Over residues 56–67 the composition is skewed to basic residues; that stretch reads GKAKPKKQSKKK. The chain crosses the membrane as a helical; Signal-anchor for type II membrane protein span at residues 77-97; it reads IILFTVFLFILAVIAWTLLWL. Residues 98–843 are Extracellular-facing; sequence YISKTESKDA…WIHKYVPSLL (746 aa). Residues 106 to 234 enclose the SEA domain; sequence DAFYFAGMFR…DSVVLNAGLR (129 aa). 12 disulfide bridges follow: Cys247/Cys273, Cys299/Cys322, Cys365/Cys396, Cys484/Cys496, Cys491/Cys509, Cys503/Cys518, Cys525/Cys544, Cys538/Cys553, Cys559/Cys571, Cys566/Cys585, Cys579/Cys594, and Cys631/Cys647. 2 consecutive CUB domains span residues 247–360 and 365–481; these read CSQY…FEVI and CENT…YNIS. 3 LDL-receptor class A domains span residues 483 to 519, 517 to 554, and 558 to 595; these read PCPV…LFCV, FCVS…QNCT, and PCNN…EGCT. A Peptidase S1 domain is found at 606-840; it reads IIGGTDTLEG…FVPWIHKYVP (235 aa). Residues His646 and Asp694 each act as charge relay system in the active site. 2 disulfides stabilise this stretch: Cys730-Cys796 and Cys762-Cys775. Ser790 serves as the catalytic Charge relay system.

Belongs to the peptidase S1 family. In terms of assembly, forms a heterodimer with SERPINA5. Post-translationally, N-glycosylated. As to expression, expressed in brain, ovary, testis, salivary gland, trachea and lung.

It is found in the cell membrane. Functionally, serine protease which preferentially hydrolyzes peptides with Arg at the P1 position. The chain is Transmembrane protease serine 7 (TMPRSS7) from Homo sapiens (Human).